A 310-amino-acid polypeptide reads, in one-letter code: Olfactory receptor 10N1 (310 aa).

At 1-23 (MDNYTLLNEFILLGIPQTQGLET) the chain is on the extracellular side. The N-linked (GlcNAc...) asparagine glycan is linked to Asn3. Residues 24–44 (LLFVVFLFIYFFTLLGNSLIF) traverse the membrane as a helical segment. The Cytoplasmic portion of the chain corresponds to 45–55 (TAIISSSTLHT). Residues 56-76 (PMYFFLGLLSVFDMLFPSVTC) form a helical membrane-spanning segment. The Extracellular segment spans residues 77-95 (PKMLFYLSVRSPAISYKGC). Cys95 and Cys187 are joined by a disulfide. Residues 96–116 (AAQLFFYHLLGSTEGCLYSVM) traverse the membrane as a helical segment. Topologically, residues 117–136 (AYDRYVAICHPLRYMLIMKP) are cytoplasmic. A helical transmembrane segment spans residues 137–157 (GVCVSLVIIAWLVGCLHATIL). Topologically, residues 158–202 (TSLTFQLVYCASNQVDYFFCDLPAVLPLACTDSKLARKVGSINVG) are extracellular. The helical transmembrane segment at 203–223 (FLALMLLFSVCVSYVHIGVAI) threads the bilayer. Over 224–237 (LRIRSAEGRQKAFS) the chain is Cytoplasmic. A helical membrane pass occupies residues 238–258 (TCSAHLTAILCAYGPVIIIYL). Residues 259–264 (QRTPNP) lie on the Extracellular side of the membrane. The helical transmembrane segment at 265-285 (LLGAVVQILNNIVSPMLNSLI) threads the bilayer. The Cytoplasmic segment spans residues 286 to 310 (YSLRNKEVKRSLRRVFQNITFHGQK).

Belongs to the G-protein coupled receptor 1 family.

It localises to the cell membrane. Its function is as follows. Odorant receptor. The protein is Olfactory receptor 10N1 of Mus musculus (Mouse).